We begin with the raw amino-acid sequence, 766 residues long: Serine/threonine-protein kinase PKH1 (766 aa).

The interval 1–52 (MGNRSLTEADHALLSKPLVPTSAEHTQTQEYPRPFVDGSNSQSGSELQASPQ) is disordered. Positions 38 to 52 (GSNSQSGSELQASPQ) are enriched in polar residues. Residues 125–391 (FKFGEQLGDG…IKQIKAHLFF (267 aa)) enclose the Protein kinase domain. Residues 135-137 (SYS) and Lys154 contribute to the ATP site. Residues 156 to 201 (LSKEYLIRQKKVKYVTVEKLALQKLNGTKGIFKLFFTFQDEASLYF) are PIF-pocket. ATP contacts are provided by residues 204–206 (EYA) and Asp210. The active-site Proton acceptor is the Asp249. Residues Glu253 and Asp267 each contribute to the ATP site. A phosphoserine mark is found at Ser294 and Ser296. The span at 476–495 (TSQPKLGSKSSTSVRSASNN) shows a compositional bias: polar residues. 2 disordered regions span residues 476-529 (TSQP…NRSR) and 725-745 (PEEGALHTKRPTSLQTRSSSN). Residues 511–521 (SVSSPSISTTS) are compositionally biased toward low complexity. Residues 735 to 745 (PTSLQTRSSSN) are compositionally biased toward polar residues.

The protein belongs to the protein kinase superfamily. AGC Ser/Thr protein kinase family. PDPK1 subfamily.

It carries out the reaction L-seryl-[protein] + ATP = O-phospho-L-seryl-[protein] + ADP + H(+). The catalysed reaction is L-threonyl-[protein] + ATP = O-phospho-L-threonyl-[protein] + ADP + H(+). Functionally, activates YPK1 by phosphorylating of a threonine residue. This chain is Serine/threonine-protein kinase PKH1 (PKH1), found in Saccharomyces cerevisiae (strain ATCC 204508 / S288c) (Baker's yeast).